We begin with the raw amino-acid sequence, 169 residues long: Spore protein SP21 (169 aa).

Disordered stretches follow at residues methionine 1–aspartate 21 and glutamine 150–alanine 169. Residues glutamine 47 to serine 159 form the sHSP domain.

This sequence belongs to the small heat shock protein (HSP20) family.

In terms of biological role, may stabilize cellular components during stress and spore formation. This is Spore protein SP21 (hspA) from Stigmatella aurantiaca (strain DW4/3-1).